A 361-amino-acid polypeptide reads, in one-letter code: Mannose-1-phosphate guanyltransferase 2 (361 aa).

Belongs to the transferase hexapeptide repeat family.

It is found in the cytoplasm. It catalyses the reaction alpha-D-mannose 1-phosphate + GTP + H(+) = GDP-alpha-D-mannose + diphosphate. It functions in the pathway nucleotide-sugar biosynthesis; GDP-alpha-D-mannose biosynthesis; GDP-alpha-D-mannose from alpha-D-mannose 1-phosphate (GTP route): step 1/1. Involved in cell wall synthesis where it is required for glycosylation. Involved in cell cycle progression through cell-size checkpoint. This chain is Mannose-1-phosphate guanyltransferase 2 (MPG1), found in Candida glabrata (strain ATCC 2001 / BCRC 20586 / JCM 3761 / NBRC 0622 / NRRL Y-65 / CBS 138) (Yeast).